Here is a 432-residue protein sequence, read N- to C-terminus: Mannan endo-1,4-beta-mannosidase 1 (432 aa).

An N-terminal signal peptide occupies residues 1–28 (MRLLGAHRAALLVLACVVVVVIHGLGEA). Trp93 and Asn209 together coordinate substrate. Glu210 acts as the Proton donor in catalysis. A substrate-binding site is contributed by Tyr289. Glu329 functions as the Nucleophile in the catalytic mechanism. Residue Trp371 participates in substrate binding.

It belongs to the glycosyl hydrolase 5 (cellulase A) family. As to expression, ubiquitous.

It is found in the secreted. It catalyses the reaction Random hydrolysis of (1-&gt;4)-beta-D-mannosidic linkages in mannans, galactomannans and glucomannans.. In Oryza sativa subsp. japonica (Rice), this protein is Mannan endo-1,4-beta-mannosidase 1 (MAN1).